A 475-amino-acid chain; its full sequence is Ribulose bisphosphate carboxylase large chain (475 aa).

The propeptide occupies 1-2 (MV). An N-acetylproline modification is found at Pro-3. N6,N6,N6-trimethyllysine is present on Lys-14. Positions 123 and 173 each coordinate substrate. Lys-175 acts as the Proton acceptor in catalysis. Lys-177 contacts substrate. Mg(2+)-binding residues include Lys-201, Asp-203, and Glu-204. At Lys-201 the chain carries N6-carboxylysine. The active-site Proton acceptor is His-294. Residues Arg-295, His-327, and Ser-379 each coordinate substrate.

This sequence belongs to the RuBisCO large chain family. Type I subfamily. In terms of assembly, heterohexadecamer of 8 large chains and 8 small chains. Requires Mg(2+) as cofactor.

It localises to the plastid. The protein localises to the chloroplast. It carries out the reaction 2 (2R)-3-phosphoglycerate + 2 H(+) = D-ribulose 1,5-bisphosphate + CO2 + H2O. The enzyme catalyses D-ribulose 1,5-bisphosphate + O2 = 2-phosphoglycolate + (2R)-3-phosphoglycerate + 2 H(+). RuBisCO catalyzes two reactions: the carboxylation of D-ribulose 1,5-bisphosphate, the primary event in carbon dioxide fixation, as well as the oxidative fragmentation of the pentose substrate in the photorespiration process. Both reactions occur simultaneously and in competition at the same active site. This chain is Ribulose bisphosphate carboxylase large chain, found in Stigeoclonium helveticum (Green alga).